Here is a 464-residue protein sequence, read N- to C-terminus: Protein FAM90A13 (464 aa).

3 disordered regions span residues methionine 1–leucine 42, valine 69–alanine 389, and alanine 411–proline 437. Composition is skewed to basic and acidic residues over residues glycine 74–glycine 89 and asparagine 97–arginine 114. Residues leucine 180–leucine 197 show a composition bias toward low complexity.

It belongs to the FAM90 family.

The protein is Protein FAM90A13 of Homo sapiens (Human).